The sequence spans 447 residues: N-succinylarginine dihydrolase (447 aa).

Residues 19–28, Asn110, and 137–138 each bind substrate; these read AGLSVGNKAS and HR. Residue Glu174 is part of the active site. Arg213 contacts substrate. The active site involves His249. Substrate-binding residues include Asp251 and Asn365. Catalysis depends on Cys371, which acts as the Nucleophile.

The protein belongs to the succinylarginine dihydrolase family. Homodimer.

The catalysed reaction is N(2)-succinyl-L-arginine + 2 H2O + 2 H(+) = N(2)-succinyl-L-ornithine + 2 NH4(+) + CO2. The protein operates within amino-acid degradation; L-arginine degradation via AST pathway; L-glutamate and succinate from L-arginine: step 2/5. In terms of biological role, catalyzes the hydrolysis of N(2)-succinylarginine into N(2)-succinylornithine, ammonia and CO(2). In Photorhabdus laumondii subsp. laumondii (strain DSM 15139 / CIP 105565 / TT01) (Photorhabdus luminescens subsp. laumondii), this protein is N-succinylarginine dihydrolase.